A 284-amino-acid chain; its full sequence is MVLMIVSGRSGSGKSVALRALEDMGFYCVDNLPVVLLPQLASTLADRNISAAVSIDVRNMPESPEVFEHAMTQLPDSFSPQLLFLDADRNTLIRRYSDTRRLHPLSAKNLSLESAIDEESDLLEPLRSRADLIIDTSEMSVHELAEMLRTRLLGKRERELTMVFESFGFKHGIPIDADYVFDVRFLPNPHWDPKLRPMTGLDKPVISFLDRHTEVHNFIYQTRSYLEQWLPMLETNNRSYLTVAIGCTGGKHRSVYVAEQLADYFRARGKNVQSRHRTLEKRKQ.

8 to 15 (GRSGSGKS) lines the ATP pocket. 56 to 59 (DVRN) lines the GTP pocket. Residues 266-284 (RARGKNVQSRHRTLEKRKQ) are RNA-binding.

The protein belongs to the RapZ-like family. RapZ subfamily. In terms of assembly, homotrimer.

In terms of biological role, modulates the synthesis of GlmS, by affecting the processing and stability of the regulatory small RNA GlmZ. When glucosamine-6-phosphate (GlcN6P) concentrations are high in the cell, RapZ binds GlmZ and targets it to cleavage by RNase E. Consequently, GlmZ is inactivated and unable to activate GlmS synthesis. Under low GlcN6P concentrations, RapZ is sequestered and inactivated by an other regulatory small RNA, GlmY, preventing GlmZ degradation and leading to synthesis of GlmS. The polypeptide is RNase adapter protein RapZ (Yersinia pseudotuberculosis serotype O:1b (strain IP 31758)).